Reading from the N-terminus, the 954-residue chain is Bifunctional glutamine synthetase adenylyltransferase/adenylyl-removing enzyme (954 aa).

The adenylyl removase stretch occupies residues 1 to 452; the sequence is MAVQKDSNKS…HFKATVGGEE (452 aa). Residues 458–954 are adenylyl transferase; sequence EHWTAQLWNV…ILAIYQAILE (497 aa).

The protein belongs to the GlnE family. Mg(2+) serves as cofactor.

The catalysed reaction is [glutamine synthetase]-O(4)-(5'-adenylyl)-L-tyrosine + phosphate = [glutamine synthetase]-L-tyrosine + ADP. It carries out the reaction [glutamine synthetase]-L-tyrosine + ATP = [glutamine synthetase]-O(4)-(5'-adenylyl)-L-tyrosine + diphosphate. Functionally, involved in the regulation of glutamine synthetase GlnA, a key enzyme in the process to assimilate ammonia. When cellular nitrogen levels are high, the C-terminal adenylyl transferase (AT) inactivates GlnA by covalent transfer of an adenylyl group from ATP to specific tyrosine residue of GlnA, thus reducing its activity. Conversely, when nitrogen levels are low, the N-terminal adenylyl removase (AR) activates GlnA by removing the adenylyl group by phosphorolysis, increasing its activity. The regulatory region of GlnE binds the signal transduction protein PII (GlnB) which indicates the nitrogen status of the cell. This is Bifunctional glutamine synthetase adenylyltransferase/adenylyl-removing enzyme from Shewanella oneidensis (strain ATCC 700550 / JCM 31522 / CIP 106686 / LMG 19005 / NCIMB 14063 / MR-1).